The primary structure comprises 443 residues: Phosphoribosylamine--glycine ligase (443 aa).

Residues 109–324 form the ATP-grasp domain; that stretch reads RNLFKKYNIK…FLDVCFGISN (216 aa). 140-202 is an ATP binding site; the sequence is MTGLGKDVVV…EEKLVGVEFT (63 aa). 3 residues coordinate Mg(2+): Gln-282, Glu-294, and Asn-296. The Mn(2+) site is built by Gln-282, Glu-294, and Asn-296.

Belongs to the GARS family. Requires Mg(2+) as cofactor. Mn(2+) serves as cofactor.

It catalyses the reaction 5-phospho-beta-D-ribosylamine + glycine + ATP = N(1)-(5-phospho-beta-D-ribosyl)glycinamide + ADP + phosphate + H(+). It participates in purine metabolism; IMP biosynthesis via de novo pathway; N(1)-(5-phospho-D-ribosyl)glycinamide from 5-phospho-alpha-D-ribose 1-diphosphate: step 2/2. The polypeptide is Phosphoribosylamine--glycine ligase (Methanococcus vannielii (strain ATCC 35089 / DSM 1224 / JCM 13029 / OCM 148 / SB)).